The primary structure comprises 262 residues: Acyl-[acyl-carrier-protein]--UDP-N-acetylglucosamine O-acyltransferase (262 aa).

The protein belongs to the transferase hexapeptide repeat family. LpxA subfamily. Homotrimer.

The protein localises to the cytoplasm. The enzyme catalyses a (3R)-hydroxyacyl-[ACP] + UDP-N-acetyl-alpha-D-glucosamine = a UDP-3-O-[(3R)-3-hydroxyacyl]-N-acetyl-alpha-D-glucosamine + holo-[ACP]. It functions in the pathway glycolipid biosynthesis; lipid IV(A) biosynthesis; lipid IV(A) from (3R)-3-hydroxytetradecanoyl-[acyl-carrier-protein] and UDP-N-acetyl-alpha-D-glucosamine: step 1/6. Functionally, involved in the biosynthesis of lipid A, a phosphorylated glycolipid that anchors the lipopolysaccharide to the outer membrane of the cell. The protein is Acyl-[acyl-carrier-protein]--UDP-N-acetylglucosamine O-acyltransferase of Psychromonas ingrahamii (strain DSM 17664 / CCUG 51855 / 37).